The following is a 1877-amino-acid chain: Protein TIC 214 (1877 aa).

The next 6 membrane-spanning stretches (helical) occupy residues 18-38 (IINSVVMVGLYYGFLTTFSIG), 67-87 (FIAGQLMMFISIYYAPLHLAL), 90-110 (PHTITVLALPYLLFHFFWNNH), 127-147 (LSIQCVFLNNLIFQLFNHFIL), 175-195 (VGWLIGHIFFMKWVELVLVWI), and 224-244 (IFSILLFITCVYYLGRIPSPI). Basic and acidic residues predominate over residues 249-258 (FKETSETEER). Residues 249-308 (FKETSETEERGEGEEETDVEIETTFETKGTRQEQEGSTEEDPSLFSEEKEDPDKIDEREE) are disordered. Acidic residues-rich tracts occupy residues 259-271 (GEGEEETDVEIET) and 284-298 (GSTEEDPSLFSEEKE). Residues 299–308 (DPDKIDEREE) are compositionally biased toward basic and acidic residues.

The protein belongs to the TIC214 family. Part of the Tic complex.

The protein localises to the plastid. It localises to the chloroplast inner membrane. In terms of biological role, involved in protein precursor import into chloroplasts. May be part of an intermediate translocation complex acting as a protein-conducting channel at the inner envelope. The chain is Protein TIC 214 from Eucalyptus globulus subsp. globulus (Tasmanian blue gum).